Here is a 392-residue protein sequence, read N- to C-terminus: NAD(P)H-quinone oxidoreductase subunit H, chloroplastic (392 aa).

It belongs to the complex I 49 kDa subunit family. As to quaternary structure, NDH is composed of at least 16 different subunits, 5 of which are encoded in the nucleus.

It is found in the plastid. Its subcellular location is the chloroplast thylakoid membrane. The catalysed reaction is a plastoquinone + NADH + (n+1) H(+)(in) = a plastoquinol + NAD(+) + n H(+)(out). It carries out the reaction a plastoquinone + NADPH + (n+1) H(+)(in) = a plastoquinol + NADP(+) + n H(+)(out). NDH shuttles electrons from NAD(P)H:plastoquinone, via FMN and iron-sulfur (Fe-S) centers, to quinones in the photosynthetic chain and possibly in a chloroplast respiratory chain. The immediate electron acceptor for the enzyme in this species is believed to be plastoquinone. Couples the redox reaction to proton translocation, and thus conserves the redox energy in a proton gradient. The chain is NAD(P)H-quinone oxidoreductase subunit H, chloroplastic from Marchantia polymorpha (Common liverwort).